Reading from the N-terminus, the 344-residue chain is Dihydroorotase (344 aa).

Positions 14 and 16 each coordinate Zn(2+). Residues H16–R18 and N42 each bind substrate. Positions 100, 137, and 175 each coordinate Zn(2+). K100 carries the post-translational modification N6-carboxylysine. H137 contacts substrate. Position 220 (L220) interacts with substrate. Residue D248 participates in Zn(2+) binding. D248 is an active-site residue. H252 and A264 together coordinate substrate.

It belongs to the metallo-dependent hydrolases superfamily. DHOase family. Class II DHOase subfamily. As to quaternary structure, homodimer. It depends on Zn(2+) as a cofactor.

The catalysed reaction is (S)-dihydroorotate + H2O = N-carbamoyl-L-aspartate + H(+). The protein operates within pyrimidine metabolism; UMP biosynthesis via de novo pathway; (S)-dihydroorotate from bicarbonate: step 3/3. In terms of biological role, catalyzes the reversible cyclization of carbamoyl aspartate to dihydroorotate. The protein is Dihydroorotase of Cupriavidus taiwanensis (strain DSM 17343 / BCRC 17206 / CCUG 44338 / CIP 107171 / LMG 19424 / R1) (Ralstonia taiwanensis (strain LMG 19424)).